The sequence spans 423 residues: Deferrochelatase (423 aa).

The segment at residues 1 to 35 (MQYKDENGVNEPSRRRLLKVIGALALAGSCPVAHA) is a signal peptide (tat-type signal). Residues 236-238 (GTA), histidine 329, 334-336 (NPR), and arginine 347 each bind heme b.

It belongs to the DyP-type peroxidase family. EfeB subfamily. In terms of assembly, homodimer. Part of a ferrous iron transporter composed of EfeU, EfeO and EfeB. Heme b is required as a cofactor. Post-translationally, predicted to be exported by the Tat system. The position of the signal peptide cleavage has not been experimentally proven.

The protein resides in the periplasm. The enzyme catalyses heme b + 2 H(+) = protoporphyrin IX + Fe(2+). Functionally, involved in the recovery of exogenous heme iron. Extracts iron from heme while preserving the protoporphyrin ring intact. The sequence is that of Deferrochelatase (efeB) from Shigella boydii serotype 4 (strain Sb227).